Reading from the N-terminus, the 302-residue chain is Glycine--tRNA ligase alpha subunit (302 aa).

It belongs to the class-II aminoacyl-tRNA synthetase family. As to quaternary structure, tetramer of two alpha and two beta subunits.

It is found in the cytoplasm. It catalyses the reaction tRNA(Gly) + glycine + ATP = glycyl-tRNA(Gly) + AMP + diphosphate. In Psychromonas ingrahamii (strain DSM 17664 / CCUG 51855 / 37), this protein is Glycine--tRNA ligase alpha subunit.